The chain runs to 477 residues: MEFPSSPPPSYETVMAQVPSILAPLVPPRYKGATEGRNSIRYSQLPPLFDTTKLYLIDNKSSDIQALNYQNDHSNFLTTVVQNANYTPMEASTQSIQLDERSRWGGDFRSILHMNMPNVTEYMFSNSFKAYLPATADASGKVLTYEWYTLTIPEGNYSEVMLLDLLNNAVVENYLAHGRQHNVKEEDIGLKFDTRNFYLGFDPETELVMPGFYTNEAFHPDIILSPGCAVDFTHSRLNNFLGIRKRLPYQEGFIIKWEDLQGGNIPALLDLEIYNPDTPGDNITPLLQDSKARSYHVGEDPSAGSTFTSYRSWFLAYNYGPVDGIKSKTVLVAPDITCGVEQIYWSLPDMAVDPVTFTSSHNPSSYPVVGTELLPLLPRSFYNGSSVYSQLLQESTAQTHVFNRFPENAILKRPPAPTIISISENVPALSNHGTLPLKNNIPGVQRVTITDARRRVCPYVYKSLGVVVPRVLSSKTF.

Belongs to the adenoviridae penton family. Interacts with the fiber protein (via N-terminal tail region). Interacts with the capsid vertex protein; this interaction binds the penton base to neighboring peripentonal hexons.

The protein localises to the virion. It is found in the host nucleus. Major capsid protein that self-associates to form penton base pentamers, each in the shape of a pentagon, situated at the 12 vertices of the pseudo T=25 capsid. Involved in virus secondary attachment to host cell after initial attachment by the fiber protein, and in endocytosis of virions. As the virus enters the host cell, penton proteins are shed concomitant with virion acidification in the endosome. This chain is Penton protein, found in Canis lupus familiaris (Dog).